A 250-amino-acid chain; its full sequence is Small ribosomal subunit protein uS2 (250 aa).

Belongs to the universal ribosomal protein uS2 family.

The sequence is that of Small ribosomal subunit protein uS2 from Paracidovorax citrulli (strain AAC00-1) (Acidovorax citrulli).